The sequence spans 138 residues: Actin-related protein 2/3 complex subunit 5 (138 aa).

The disordered stretch occupies residues 1 to 21 (MNYEDDNVESGQAGKSDAEYK).

The protein belongs to the ARPC5 family. Component of the Arp2/3 complex composed of arpB/Arp2, arpC/Arp3, arcA/p41-arc, arcB/p34-arc, arcC/p21-arc, arcD/p20-arc and arcE/p16-arc. Interacts with carmil (via the region between the LRR domain and COOH-terminal proline-rich domain); carmil is required for Arp2/3-dependent actin nucleation. Arp2/3 complex, MyoB, MyoC, and the alpha and beta subunits of capping protein all form a larger complex with carmil.

The protein localises to the cytoplasm. Its subcellular location is the cytoskeleton. The protein resides in the cytosol. It is found in the cell cortex. It localises to the cell projection. The protein localises to the pseudopodium. Functions as a component of the Arp2/3 complex which is involved in regulation of actin polymerization and together with an activating nucleation-promoting factor (NPF) mediates the formation of branched actin networks. Seems to contact the pointed end of the daughter actin filament. The Arp2/3 complex is involved in organizing the actin system in cell motility and chemotaxis, in phagocytosis and macropinocytosis, at late steps of endosome processing, and in mitosis. In concert with a group of other proteins, the Arp2/3 complex plays a general role in the rapid activation and adaptation of the actin system to its multiple functions. The polypeptide is Actin-related protein 2/3 complex subunit 5 (arcE) (Dictyostelium discoideum (Social amoeba)).